The following is a 548-amino-acid chain: Thermosome subunit alpha (548 aa).

The disordered stretch occupies residues 527 to 548; it reads TKPEGGQGGGMPGGMGGMDMGM. Over residues 531–548 the composition is skewed to gly residues; it reads GGQGGGMPGGMGGMDMGM.

The protein belongs to the TCP-1 chaperonin family. In terms of assembly, forms a Heterooligomeric complex of two stacked eight-membered rings.

Its function is as follows. Molecular chaperone; binds unfolded polypeptides in vitro, and has a weak ATPase activity. This is Thermosome subunit alpha (thsA) from Thermococcus sp. (strain JCM 11816 / KS-1).